The following is a 304-amino-acid chain: Caspase-6 (304 aa).

The segment at 1–29 is disordered; the sequence is MSGAERRPAAGRVQLDSKPTPTTTADGNQ. Positions 1-35 are excised as a propeptide; sequence MSGAERRPAAGRVQLDSKPTPTTTADGNQNITEVD. Over residues 17 to 29 the composition is skewed to polar residues; sequence SKPTPTTTADGNQ. Positions 54–56 are tri-arginine exosite; sequence QRR. Residue H133 is part of the active site. The tract at residues 137–154 is 130's region; the sequence is DHVYAYDAQIKIETITNM. Residue C175 is part of the active site. Residues 192-204 constitute a propeptide that is removed on maturation; the sequence is SKDETTVNQTEVD.

This sequence belongs to the peptidase C14A family. Heterotetramer that consists of two anti-parallel arranged heterodimers, each one formed by a 18 kDa (p18) and a 11 kDa (p11) subunit. As to quaternary structure, heterotetramer that consists of two anti-parallel arranged heterodimers, each one formed by a 18 kDa (Caspase-6 subunit p18) and a 11 kDa (Caspase-6 subunit p11) subunit. In terms of tissue distribution, widely expressed.

It is found in the cytoplasm. It localises to the nucleus. The enzyme catalyses Strict requirement for Asp at position P1 and has a preferred cleavage sequence of Val-Glu-His-Asp-|-.. With respect to regulation, during activation, the N-terminal prodomain is removed by cleavage. Concomitantly, double cleavage gives rise to a large 18-kDa and a small 11-kDa subunit. The two large and two small subunits then assemble to form the active CASP6 complex. Intramolecular cleavage at Asp-191 is a prerequisite for CASP6 self-activation. In terms of biological role, cysteine protease that plays essential roles in programmed cell death, development and innate immunity. Acts as a non-canonical executioner caspase during apoptosis: localizes in the nucleus and cleaves the nuclear structural protein lamin-A/LMNA thereby inducing nuclear shrinkage and fragmentation. Lamin-A/LMNA cleavage is required for chromatin condensation and nuclear disassembly during apoptotic execution. Plays an essential role in defense against viruses by acting as a central mediator of the ZBP1-mediated pyroptosis, apoptosis, and necroptosis (PANoptosis), independently of its cysteine protease activity. PANoptosis is a unique inflammatory programmed cell death, which provides a molecular scaffold that allows the interactions and activation of machinery required for inflammasome/pyroptosis, apoptosis and necroptosis. This is Caspase-6 from Gallus gallus (Chicken).